Here is a 190-residue protein sequence, read N- to C-terminus: Cytoglobin (190 aa).

The disordered stretch occupies residues 1–21; it reads MEKVPGDMEIERRERNEELSE. Residues 18–167 form the Globin domain; the sequence is ELSEAERKAV…IYSHVTAAYK (150 aa). Cys-38 and Cys-83 are disulfide-bonded. Heme b contacts are provided by His-81 and His-113.

The protein belongs to the globin family. In terms of assembly, monomeric. Homodimer; disulfide-linked in vitro. Also homooligomeric in vitro. Post-translationally, the formation of an intramolecular disulfide bond between cysteines Cys-38 and Cys-83 specifically enhances the nitrite reductase activity. In terms of tissue distribution, widely expressed (at protein level).

The protein resides in the cytoplasm. It is found in the nucleus. The catalysed reaction is Fe(II)-heme b-[protein] + nitric oxide + O2 = Fe(III)-heme b-[protein] + nitrate. The enzyme catalyses Fe(III)-heme b-[protein] + nitric oxide + H2O = Fe(II)-heme b-[protein] + nitrite + 2 H(+). It catalyses the reaction 2 superoxide + 2 H(+) = H2O2 + O2. It carries out the reaction H2O2 + AH2 = A + 2 H2O. The nitric oxide dioxygenase activity is activated by a reducing system composed of cytochrome b5, its upstream reductase CYB5R3 and NADH. In terms of biological role, probable multifunctional globin with a hexacoordinated heme iron required for the catalysis of various reactions depending on redox condition of the cell as well as oxygen availability. Has a nitric oxide dioxygenase (NOD) activity and is most probably involved in cell-mediated and oxygen-dependent nitric oxide consumption. By scavenging this second messenger may regulate several biological processes including endothelium-mediated vasodilation and vascular tone. Under normoxic conditions functions as a nitric oxide dioxygenase (NOD) but under hypoxic conditions the globin may switch its function to that of a nitrite (NO2) reductase (NiR), generating nitric oxide. Could also have peroxidase and superoxide dismutase activities, detoxifying reactive oxygen species and protecting cells against oxidative stress. Also binds dioxygen with low affinity and could function as an oxygen sensor but has probably no function as a respiratory oxygen carrier. This is Cytoglobin from Rattus norvegicus (Rat).